We begin with the raw amino-acid sequence, 434 residues long: MQVSVETTQGLERRLTISVPAEQIENTVKEALKSEAKRARIPGFRPGKVPVSVINKRYGNAIRQDITGEVMQRNFIEAIIAEKLNPAGAPTFTPGSTEGENFEFVATFEIYPEVELKGLESITVEQPTAEVTEADVDSMIETLRNQHATFEVAERAAAEGDKAKINFVGSIDGEEFEGGKADDFELQLGSGRMIPGFESGVEGHKAGEEFNIEVTFPEDYHAENLKGKVATFAITLNEVQAANLPEVNDEFATLFGITEGGIDALRGEISKNMSRELEQALKANVKEQVLNGLVEQNDIELPAALIDGEVEVLRKQAMQRFGDQAANMPELPADLFTEQAARRVKVGLLLGEVIKANELKAEDERVQALIASMASAYEDPSEVVAYYNGNEELMQNMRNVALEEQAVEALLKTATLTEKAVNFEEFMNKATGRA.

The PPIase FKBP-type domain maps to Gly-160–Pro-245.

The protein belongs to the FKBP-type PPIase family. Tig subfamily.

The protein resides in the cytoplasm. The enzyme catalyses [protein]-peptidylproline (omega=180) = [protein]-peptidylproline (omega=0). Functionally, involved in protein export. Acts as a chaperone by maintaining the newly synthesized protein in an open conformation. Functions as a peptidyl-prolyl cis-trans isomerase. This chain is Trigger factor, found in Shewanella halifaxensis (strain HAW-EB4).